The sequence spans 391 residues: Digeranylgeranylglycerophospholipid reductase (391 aa).

Residues Gly-18, Glu-37, Cys-48, Ala-49, Ala-51, Arg-98, Ala-122, Asp-279, Gly-291, and Ile-292 each coordinate FAD.

The protein belongs to the geranylgeranyl reductase family. DGGGPL reductase subfamily. FAD serves as cofactor.

The catalysed reaction is a 2,3-bis-O-phytanyl-sn-glycerol 1-phospholipid + 8 A = a 2,3-bis-O-(geranylgeranyl)-sn-glycerol 1-phospholipid + 8 AH2. It carries out the reaction 2,3-bis-O-(phytanyl)-sn-glycerol 1-phosphate + 8 A = 2,3-bis-O-(geranylgeranyl)-sn-glycerol 1-phosphate + 8 AH2. The enzyme catalyses CDP-2,3-bis-O-(geranylgeranyl)-sn-glycerol + 8 AH2 = CDP-2,3-bis-O-(phytanyl)-sn-glycerol + 8 A. It catalyses the reaction archaetidylserine + 8 AH2 = 2,3-bis-O-phytanyl-sn-glycero-3-phospho-L-serine + 8 A. The protein operates within membrane lipid metabolism; glycerophospholipid metabolism. Functionally, is involved in the reduction of 2,3-digeranylgeranylglycerophospholipids (unsaturated archaeols) into 2,3-diphytanylglycerophospholipids (saturated archaeols) in the biosynthesis of archaeal membrane lipids. Catalyzes the formation of archaetidic acid (2,3-di-O-phytanyl-sn-glyceryl phosphate) from 2,3-di-O-geranylgeranylglyceryl phosphate (DGGGP) via the hydrogenation of each double bond of the isoprenoid chains. Is also probably able to reduce double bonds of geranyl groups in CDP-2,3-bis-O-(geranylgeranyl)-sn-glycerol and archaetidylserine, thus acting at various stages in the biosynthesis of archaeal membrane lipids. This Methanocaldococcus jannaschii (strain ATCC 43067 / DSM 2661 / JAL-1 / JCM 10045 / NBRC 100440) (Methanococcus jannaschii) protein is Digeranylgeranylglycerophospholipid reductase.